Consider the following 472-residue polypeptide: MSKIKTRFAPSPTGYLHVGGARTALYSWLFSRHNKGEFVLRIEDTDLERSTQPAIDAIMDGMNWLNLNWDEGPYYQTKRFDRYNQVIDQMLAAGTAYRCYCSKERLEKLREDQMAKGEKPRYDGCCRHGDHNHTPDEPHVVRFLNPQEGSVIFNDKIRGPIEFSNQELDDLIIRRTDGSPTYNFCVVIDDWDMEITHVIRGEDHINNTPRQINILKALGAPVPEYAHVSMILGDDGKKLSKRYNAVSVMQYRDDGYLPEALLNYLVRLGWSHGDQEIFSIDEMIKDFTLEAISKSASAFNTDKLLWLNHHYINTLPAEQVAVHLDWHIKQQNIDTSNGPSLVELIKLLGERCKTLKEMAESCHYFYVDFDSFEETAAKKHLRPVARQPLEVVRDKLSAITDWTAENVHKAIQETAEELEVGMGKVGMPLRVAVTGAGQSPALDVTVHAIGKARSIARINKALDFITDRENQA.

The short motif at 10–20 (PSPTGYLHVGG) is the 'HIGH' region element. The Zn(2+) site is built by C99, C101, C126, and H128. Positions 238-242 (KLSKR) match the 'KMSKS' region motif. ATP is bound at residue K241.

The protein belongs to the class-I aminoacyl-tRNA synthetase family. Glutamate--tRNA ligase type 1 subfamily. In terms of assembly, monomer. The cofactor is Zn(2+).

It is found in the cytoplasm. The enzyme catalyses tRNA(Glu) + L-glutamate + ATP = L-glutamyl-tRNA(Glu) + AMP + diphosphate. Its function is as follows. Catalyzes the attachment of glutamate to tRNA(Glu) in a two-step reaction: glutamate is first activated by ATP to form Glu-AMP and then transferred to the acceptor end of tRNA(Glu). This is Glutamate--tRNA ligase from Proteus mirabilis (strain HI4320).